The sequence spans 702 residues: Sodium/hydrogen exchanger 6 (702 aa).

The next 12 helical transmembrane spans lie at 72–92, 104–124, 177–197, 212–232, 253–273, 279–299, 325–345, 373–393, 415–435, 437–457, 480–500, and 516–536; these read SANL…IWLF, GLAM…IHVP, VTFD…FYAG, ILAY…SIMY, CLLF…AIFH, VELY…AIVL, IGIF…TGVV, TFLL…FCGI, FELL…LTLF, FQNH…IFLG, NFQH…ALAI, and LLIV…MLSC.

The protein belongs to the monovalent cation:proton antiporter 1 (CPA1) transporter (TC 2.A.36) family. In terms of assembly, homodimer. Interacts with RACK1; regulates the distribution of SLC9A6 between endosomes and the plasma membrane. Ubiquitinated (in vitro). Post-translationally, glycosylated.

It is found in the endosome membrane. The protein localises to the recycling endosome membrane. It localises to the early endosome membrane. Its subcellular location is the late endosome membrane. The protein resides in the cell membrane. The catalysed reaction is Na(+)(in) + H(+)(out) = Na(+)(out) + H(+)(in). It carries out the reaction K(+)(in) + H(+)(out) = K(+)(out) + H(+)(in). Functionally, endosomal Na(+), K(+)/H(+) antiporter. Mediates the electroneutral exchange of endosomal luminal H(+) for a cytosolic Na(+) or K(+). By facilitating proton efflux, SLC9A6 counteracts the acidity generated by vacuolar (V)-ATPase, thereby limiting luminal acidification. Responsible for alkalizing and maintaining the endosomal pH, and consequently in, e.g., endosome maturation and trafficking of recycling endosomal cargo. Plays a critical role during neurodevelopment by regulating synaptic development and plasticity. Implicated in the maintenance of cell polarity in a manner that is dependent on its ability to modulate intravesicular pH. Regulates intracelular pH in some specialized cells, osteoclasts and stereocilia where this transporter localizes to the plasma membrane. In Mus musculus (Mouse), this protein is Sodium/hydrogen exchanger 6 (Slc9a6).